The sequence spans 84 residues: Envelope glycoprotein N (84 aa).

The N-terminal stretch at 1-26 (MSCKKSARQSLYVSLCLFYILVFAAA) is a signal peptide. The Virion surface portion of the chain corresponds to 27–47 (TEVDFYSPECHSHTYEIVLNS). Residues 48 to 68 (FSSIWLLINLFLLLCSFAIFL) traverse the membrane as a helical segment. Residues 69–84 (KYWCYKTFASETVKGY) lie on the Intravirion side of the membrane.

Belongs to the herpesviridae glycoprotein N family. As to quaternary structure, interacts (via N-terminus) with gM (via N-terminus). The gM-gN heterodimer forms the gCII complex.

The protein resides in the virion membrane. It localises to the host membrane. The protein localises to the host Golgi apparatus. It is found in the host trans-Golgi network. In terms of biological role, envelope glycoprotein necessary for proper maturation of gM and modulation of its membrane fusion activity. Also plays a critical role in virion morphogenesis. This is Envelope glycoprotein N from Homo sapiens (Human).